Here is a 236-residue protein sequence, read N- to C-terminus: MRILVINPNSSSALTESVADAAQQVVATGTIISAINPSRGPAVIEGSFDEALATFHLIEEVERAERENPPDAYVIACFGDPGLDAVKELTDRPVVGVAEAAIHMSSFVAATFSIVSILPRVRKHLHELVRQAGATNRLASIKLPNLGVMAFHEDEHAALETLKQAAKEAVQEDGAESIVLGCAGMVGFARQLSDELGVPVIDPVEAACRVAESLVALGYQTSKANSYQKPTEKQYL.

In terms of assembly, homohexamer, homoheptamer or homooctamer.

The catalysed reaction is a D-5-monosubstituted hydantoin = a L-5-monosubstituted hydantoin. It carries out the reaction D-5-benzylhydantoin = L-5-benzylhydantoin. Completely inhibited by HgCl(2) and iodoacetamide. Stimulated by dithiothreitol. Involved in the asymmetric conversion of racemic 5-substituted hydantoins to the corresponding L-amino acids. Catalyzes the racemization via enolization of D- and L-5-monosubstituted hydantoins. It shows preference for hydantoins with arylalkyl side chains such as 5-benzylhydantoin (BH) and, to a lesser extent, 5-(3-indolylmethylene)hydantoin (IMH). The sequence is that of Hydantoin racemase from Paenarthrobacter aurescens (Arthrobacter aurescens).